The following is a 189-amino-acid chain: Large ribosomal subunit protein uL5 (189 aa).

It belongs to the universal ribosomal protein uL5 family. In terms of assembly, part of the 50S ribosomal subunit; part of the 5S rRNA/L5/L18/L25 subcomplex. Contacts the 5S rRNA and the P site tRNA. Forms a bridge to the 30S subunit in the 70S ribosome.

Its function is as follows. This is one of the proteins that bind and probably mediate the attachment of the 5S RNA into the large ribosomal subunit, where it forms part of the central protuberance. In the 70S ribosome it contacts protein S13 of the 30S subunit (bridge B1b), connecting the 2 subunits; this bridge is implicated in subunit movement. Contacts the P site tRNA; the 5S rRNA and some of its associated proteins might help stabilize positioning of ribosome-bound tRNAs. The chain is Large ribosomal subunit protein uL5 from Parafrankia sp. (strain EAN1pec).